The following is a 490-amino-acid chain: ATP synthase subunit beta, plastid (490 aa).

170 to 177 (GGAGVGKT) is a binding site for ATP.

It belongs to the ATPase alpha/beta chains family. As to quaternary structure, F-type ATPases have 2 components, CF(1) - the catalytic core - and CF(0) - the membrane proton channel. CF(1) has five subunits: alpha(3), beta(3), gamma(1), delta(1), epsilon(1). CF(0) has four main subunits: a(1), b(1), b'(1) and c(9-12).

The protein resides in the plastid thylakoid membrane. The enzyme catalyses ATP + H2O + 4 H(+)(in) = ADP + phosphate + 5 H(+)(out). Produces ATP from ADP in the presence of a proton gradient across the membrane. The catalytic sites are hosted primarily by the beta subunits. In Cuscuta reflexa (Southern Asian dodder), this protein is ATP synthase subunit beta, plastid.